Here is a 400-residue protein sequence, read N- to C-terminus: Canavanine gamma-lyase (400 aa).

An N6-(pyridoxal phosphate)lysine modification is found at K213.

The protein belongs to the trans-sulfuration enzymes family. The cofactor is pyridoxal 5'-phosphate.

The enzyme catalyses L-canavanine + H2O = N-hydroxyguanidine + L-homoserine. Lyase involved in the degradation of canavanine, the delta-oxa-analog of arginine, allowing growth on canavanine as sole nitrogen and carbon source. Catalyzes the elimination of hydroxyguanidine from canavanine with a subsequent water addition to yield homoserine. Is highly specific for canavanine and cannot use methionine, cystathionine or arginine. This chain is Canavanine gamma-lyase, found in Pseudomonas canavaninivorans.